We begin with the raw amino-acid sequence, 646 residues long: Phosphomethylpyrimidine synthase (646 aa).

Substrate is bound by residues Asn-235, Met-264, Tyr-293, His-329, 349 to 351 (SRG), 390 to 393 (DGLR), and Glu-429. His-433 provides a ligand contact to Zn(2+). Tyr-456 contacts substrate. His-497 is a binding site for Zn(2+). Positions 577, 580, and 585 each coordinate [4Fe-4S] cluster.

It belongs to the ThiC family. Homodimer. The cofactor is [4Fe-4S] cluster.

It carries out the reaction 5-amino-1-(5-phospho-beta-D-ribosyl)imidazole + S-adenosyl-L-methionine = 4-amino-2-methyl-5-(phosphooxymethyl)pyrimidine + CO + 5'-deoxyadenosine + formate + L-methionine + 3 H(+). The protein operates within cofactor biosynthesis; thiamine diphosphate biosynthesis. Functionally, catalyzes the synthesis of the hydroxymethylpyrimidine phosphate (HMP-P) moiety of thiamine from aminoimidazole ribotide (AIR) in a radical S-adenosyl-L-methionine (SAM)-dependent reaction. The polypeptide is Phosphomethylpyrimidine synthase (Vibrio campbellii (strain ATCC BAA-1116)).